The following is a 244-amino-acid chain: Ureidoacrylate amidohydrolase RutB (244 aa).

D38 acts as the Proton acceptor in catalysis. Residue K147 is part of the active site. C180 serves as the catalytic Nucleophile.

This sequence belongs to the isochorismatase family. RutB subfamily.

The enzyme catalyses (Z)-3-ureidoacrylate + H2O + H(+) = (Z)-3-aminoacrylate + NH4(+) + CO2. It carries out the reaction (Z)-3-ureidoacrylate + H2O = (Z)-3-aminoacrylate + carbamate + H(+). The catalysed reaction is (Z)-2-methylureidoacrylate + H2O + H(+) = (Z)-2-methylaminoacrylate + NH4(+) + CO2. Hydrolyzes ureidoacrylate to form aminoacrylate and carbamate. The carbamate hydrolyzes spontaneously, thereby releasing one of the nitrogen atoms of the pyrimidine ring as ammonia and one of its carbon atoms as CO2. In Shigella sonnei (strain Ss046), this protein is Ureidoacrylate amidohydrolase RutB.